We begin with the raw amino-acid sequence, 206 residues long: Riboflavin transporter RibU (206 aa).

6 helical membrane passes run 7-27 (MVLI…ILQF), 42-62 (IIPV…IILF), 79-99 (WIGV…VWFF), 113-133 (IVLA…FYAL), 147-169 (IFAG…PTYL), and 173-195 (VLPF…VTVF).

This sequence belongs to the prokaryotic riboflavin transporter (P-RFT) (TC 2.A.87) family. As to quaternary structure, in E.coli forms a stable energy-coupling factor (ECF) transporter complex composed of 2 membrane-embedded substrate-binding protein (S component), 2 ATP-binding proteins (A and A' components) and 2 transmembrane proteins (T component), probably with a stoichiometry of 2:1:1:2. May be able to interact with more than 1 S component at a time.

It is found in the cell membrane. In terms of biological role, mediates riboflavin uptake, may also transport FMN and roseoflavin. Probably a riboflavin-binding protein that interacts with the energy-coupling factor (ECF) ABC-transporter complex. Unlike classic ABC transporters this ECF transporter provides the energy necessary to transport a number of different substrates. The substrates themselves are bound by transmembrane, not extracytoplasmic soluble proteins. Uptake of riboflavin into proteosomes containing EcfA1A2T and RibU has been demonstrated. Uptake requires hydrolyzable Mg-ATP. This Lactococcus lactis subsp. cremoris (strain MG1363) protein is Riboflavin transporter RibU (ribU).